The chain runs to 179 residues: Interleukin-10 (179 aa).

A signal peptide spans 1–19 (MPSSSALLCCLVFLAGVAA). Disulfide bonds link cysteine 31–cysteine 127 and cysteine 81–cysteine 133. An N-linked (GlcNAc...) asparagine glycan is attached at asparagine 135.

This sequence belongs to the IL-10 family. Homodimer. Interacts with IL10RA and IL10RB.

It localises to the secreted. Major immune regulatory cytokine that acts on many cells of the immune system where it has profound anti-inflammatory functions, limiting excessive tissue disruption caused by inflammation. Mechanistically, IL10 binds to its heterotetrameric receptor comprising IL10RA and IL10RB leading to JAK1 and STAT2-mediated phosphorylation of STAT3. In turn, STAT3 translocates to the nucleus where it drives expression of anti-inflammatory mediators. Targets antigen-presenting cells (APCs) such as macrophages and monocytes and inhibits their release of pro-inflammatory cytokines including granulocyte-macrophage colony-stimulating factor /GM-CSF, granulocyte colony-stimulating factor/G-CSF, IL-1 alpha, IL-1 beta, IL-6, IL-8 and TNF-alpha. Also interferes with antigen presentation by reducing the expression of MHC-class II and co-stimulatory molecules, thereby inhibiting their ability to induce T cell activation. In addition, controls the inflammatory response of macrophages by reprogramming essential metabolic pathways including mTOR signaling. The sequence is that of Interleukin-10 (IL10) from Cervus elaphus (Red deer).